A 590-amino-acid polypeptide reads, in one-letter code: Mannosyl-oligosaccharide 1,2-alpha-mannosidase mans-2 (590 aa).

Residues 1-9 (MKTVRFNKQ) lie on the Cytoplasmic side of the membrane. Residues 10–30 (ALAILAACFIFLLCVVCYFSA) traverse the membrane as a helical; Signal-anchor for type II membrane protein segment. Topologically, residues 31–590 (SSESHNAVVV…EAHPVPVLTN (560 aa)) are lumenal. The segment covering 88–102 (PARVESKPPGEKTST) has biased composition (basic and acidic residues). The tract at residues 88–112 (PARVESKPPGEKTSTEPEETGVGKA) is disordered. 4 N-linked (GlcNAc...) asparagine glycosylation sites follow: asparagine 156, asparagine 212, asparagine 373, and asparagine 402. Cysteine 423 and cysteine 456 form a disulfide bridge. The Proton donor role is filled by glutamate 470. Residue threonine 580 coordinates Ca(2+).

Belongs to the glycosyl hydrolase 47 family. The cofactor is Ca(2+).

It localises to the membrane. The catalysed reaction is N(4)-(alpha-D-Man-(1-&gt;2)-alpha-D-Man-(1-&gt;2)-alpha-D-Man-(1-&gt;3)-[alpha-D-Man-(1-&gt;2)-alpha-D-Man-(1-&gt;3)-[alpha-D-Man-(1-&gt;2)-alpha-D-Man-(1-&gt;6)]-alpha-D-Man-(1-&gt;6)]-beta-D-Man-(1-&gt;4)-beta-D-GlcNAc-(1-&gt;4)-beta-D-GlcNAc)-L-asparaginyl-[protein] (N-glucan mannose isomer 9A1,2,3B1,2,3) + 4 H2O = N(4)-(alpha-D-Man-(1-&gt;3)-[alpha-D-Man-(1-&gt;3)-[alpha-D-Man-(1-&gt;6)]-alpha-D-Man-(1-&gt;6)]-beta-D-Man-(1-&gt;4)-beta-D-GlcNAc-(1-&gt;4)-beta-D-GlcNAc)-L-asparaginyl-[protein] (N-glucan mannose isomer 5A1,2) + 4 beta-D-mannose. The enzyme catalyses N(4)-(alpha-D-Man-(1-&gt;2)-alpha-D-Man-(1-&gt;2)-alpha-D-Man-(1-&gt;3)-[alpha-D-Man-(1-&gt;3)-[alpha-D-Man-(1-&gt;2)-alpha-D-Man-(1-&gt;6)]-alpha-D-Man-(1-&gt;6)]-beta-D-Man-(1-&gt;4)-beta-D-GlcNAc-(1-&gt;4)-beta-D-GlcNAc)-L-asparaginyl-[protein] (N-glucan mannose isomer 8A1,2,3B1,3) + 3 H2O = N(4)-(alpha-D-Man-(1-&gt;3)-[alpha-D-Man-(1-&gt;3)-[alpha-D-Man-(1-&gt;6)]-alpha-D-Man-(1-&gt;6)]-beta-D-Man-(1-&gt;4)-beta-D-GlcNAc-(1-&gt;4)-beta-D-GlcNAc)-L-asparaginyl-[protein] (N-glucan mannose isomer 5A1,2) + 3 beta-D-mannose. It functions in the pathway protein modification; protein glycosylation. Its function is as follows. Involved in the maturation of Asn-linked oligosaccharides. Progressively trim alpha-1,2-linked mannose residues from Man(9)GlcNAc(2) to produce Man(5)GlcNAc(2). The chain is Mannosyl-oligosaccharide 1,2-alpha-mannosidase mans-2 from Caenorhabditis elegans.